The following is a 2646-amino-acid chain: Probable inactive serine/threonine-protein kinase roco10 (2646 aa).

Disordered stretches follow at residues 28-122, 138-168, 205-248, 281-457, 477-516, 605-656, and 882-907; these read LNYS…LSGG, NIPI…KDKD, PLFI…VSPS, QQQR…VKQA, MSKL…HTSP, TSPN…PHQY, and QSSS…STPS. Residues 46 to 56 show a composition bias toward polar residues; it reads PQQNLLENDTL. Low complexity-rich tracts occupy residues 78 to 115, 147 to 161, and 215 to 228; these read IITT…TSPS, SPTS…NNNN, and SRNN…GGNK. Polar residues predominate over residues 235–248; sequence KISSTSAAGDVSPS. Composition is skewed to low complexity over residues 285–297 and 325–334; these read NGNN…NNNN and NNNNNNNNNN. Positions 335–345 are enriched in polar residues; that stretch reads KQPQHPMNGNH. Over residues 346–394 the composition is skewed to low complexity; it reads SPSNGTSGSLSMSGSGIDNGGNNNNNSNTHGSSSNQSSGVTSPIIQSTS. Composition is skewed to polar residues over residues 402–416 and 428–443; these read GLNS…SSPT and TSAS…PLMN. Composition is skewed to low complexity over residues 444–454, 491–516, 605–627, 634–651, and 883–907; these read STGVSSSSSGV, PSSP…HTSP, TSPN…NSSP, QQQQ…NTNT, and SSSS…STPS. A Rho-GAP domain is found at 585–807; it reads SSISPISTAA…MFIQQADILF (223 aa). LRR repeat units follow at residues 968–987, 989–1011, 1012–1033, 1040–1061, 1062–1083, 1085–1108, 1109–1131, 1132–1154, 1155–1176, 1178–1199, 1201–1222, 1224–1247, 1248–1270, 1271–1298, and 1303–1327; these read QKLD…IKQL, DLQE…ARLT, SLRT…MADF, NLEN…YTWL, KLKT…IFQI, TLEV…CTST, KLRS…INLV, ELQV…QKLT, SLTE…LLLL, NLKK…IHRM, SLIE…IVAL, KLNS…YIQK, GKEG…YRTR, IIML…SFSS, and LPSL…ILDI. One can recognise a Roc domain in the interval 1262–1474; sequence TNVPCYRTRI…RDIKQMIAKN (213 aa). Disordered stretches follow at residues 1293–1317, 1651–1670, and 1957–2026; these read KSSF…SNNS, NNNN…SRSM, and NNSS…KEKE. The span at 1651-1669 shows a compositional bias: low complexity; sequence NNNNSNGNNVGRGRSGSRS. The segment covering 1966 to 1975 has biased composition (polar residues); the sequence is PIASSRSNPK. Positions 1983–1996 are enriched in low complexity; it reads NLIQSNNNDNNNSL. Over residues 1997–2026 the composition is skewed to basic and acidic residues; the sequence is SKKDLKELAKQNKEKEKEKEKDKDKEKEKE. A Protein kinase domain is found at 2049–2342; sequence FSICHFIKEI…PSKIISQLYT (294 aa). Residues 2055–2063 and lysine 2094 each bind ATP; that span reads IKEIDYREI. An RGS domain is found at 2412–2536; the sequence is MVVLNNKQST…FTVPTTNKNG (125 aa).

It belongs to the protein kinase superfamily. TKL Ser/Thr protein kinase family. ROCO subfamily.

This chain is Probable inactive serine/threonine-protein kinase roco10 (roco10), found in Dictyostelium discoideum (Social amoeba).